A 509-amino-acid chain; its full sequence is tRNA (guanine(37)-N(1))-methyltransferase (509 aa).

The transit peptide at 1 to 57 (MVLWILWRPFGFSRRLLKLERHSITESKSLIPLAWTSLTQTLSESPGIFLLGQRKRF) directs the protein to the mitochondrion. S-adenosyl-L-methionine contacts are provided by residues histidine 289, 327-328 (DL), 355-356 (DG), and asparagine 387. The segment at 478 to 509 (TKNPENHEDPPLKRQRTAEAFSDEKTQIASNT) is disordered.

The protein belongs to the class I-like SAM-binding methyltransferase superfamily. TRM5/TYW2 family. In terms of assembly, monomer.

Its subcellular location is the mitochondrion matrix. It localises to the nucleus. The protein localises to the cytoplasm. The catalysed reaction is guanosine(37) in tRNA + S-adenosyl-L-methionine = N(1)-methylguanosine(37) in tRNA + S-adenosyl-L-homocysteine + H(+). In terms of biological role, involved in mitochondrial tRNA methylation. Specifically methylates the N1 position of guanosine-37 in various tRNAs. Methylation is not dependent on the nature of the nucleoside 5' of the target nucleoside. This is the first step in the biosynthesis of wybutosine (yW), a modified base adjacent to the anticodon of tRNAs and required for accurate decoding. In Macaca fascicularis (Crab-eating macaque), this protein is tRNA (guanine(37)-N(1))-methyltransferase.